A 127-amino-acid polypeptide reads, in one-letter code: Major sperm protein 33 (127 aa).

At A2 the chain carries N-acetylalanine. The MSP domain maps to 9–126 (DIQTQPGTKI…RRKNLPIEYN (118 aa)).

In terms of tissue distribution, sperm.

It is found in the cell projection. The protein localises to the pseudopodium. Its subcellular location is the cytoplasm. The protein resides in the cytoskeleton. Central component in molecular interactions underlying sperm crawling. Forms an extensive filament system that extends from sperm villipoda, along the leading edge of the pseudopod. The polypeptide is Major sperm protein 33 (msp-33) (Caenorhabditis elegans).